We begin with the raw amino-acid sequence, 426 residues long: 3-phosphoshikimate 1-carboxyvinyltransferase (426 aa).

Residues lysine 22, serine 23, and arginine 27 each coordinate 3-phosphoshikimate. Lysine 22 serves as a coordination point for phosphoenolpyruvate. Phosphoenolpyruvate contacts are provided by glycine 96 and arginine 124. Residues serine 170, serine 171, glutamine 172, serine 198, aspartate 314, asparagine 337, and lysine 341 each coordinate 3-phosphoshikimate. Glutamine 172 contacts phosphoenolpyruvate. The active-site Proton acceptor is aspartate 314. Phosphoenolpyruvate-binding residues include arginine 345, arginine 387, and lysine 412.

The protein belongs to the EPSP synthase family. In terms of assembly, monomer.

It localises to the cytoplasm. It catalyses the reaction 3-phosphoshikimate + phosphoenolpyruvate = 5-O-(1-carboxyvinyl)-3-phosphoshikimate + phosphate. It participates in metabolic intermediate biosynthesis; chorismate biosynthesis; chorismate from D-erythrose 4-phosphate and phosphoenolpyruvate: step 6/7. Functionally, catalyzes the transfer of the enolpyruvyl moiety of phosphoenolpyruvate (PEP) to the 5-hydroxyl of shikimate-3-phosphate (S3P) to produce enolpyruvyl shikimate-3-phosphate and inorganic phosphate. The sequence is that of 3-phosphoshikimate 1-carboxyvinyltransferase from Vibrio campbellii (strain ATCC BAA-1116).